Consider the following 61-residue polypeptide: Large ribosomal subunit protein bL32 (61 aa).

This sequence belongs to the bacterial ribosomal protein bL32 family.

The protein is Large ribosomal subunit protein bL32 of Cytophaga hutchinsonii (strain ATCC 33406 / DSM 1761 / CIP 103989 / NBRC 15051 / NCIMB 9469 / D465).